We begin with the raw amino-acid sequence, 116 residues long: Small ribosomal subunit protein uS13 (116 aa).

Residues 92–116 (RRGLPVRGQNTKNNARTRKGAKRSR) are disordered. Residues 106 to 116 (ARTRKGAKRSR) show a composition bias toward basic residues.

This sequence belongs to the universal ribosomal protein uS13 family. As to quaternary structure, part of the 30S ribosomal subunit. Forms a loose heterodimer with protein S19. Forms two bridges to the 50S subunit in the 70S ribosome.

Functionally, located at the top of the head of the 30S subunit, it contacts several helices of the 16S rRNA. In the 70S ribosome it contacts the 23S rRNA (bridge B1a) and protein L5 of the 50S subunit (bridge B1b), connecting the 2 subunits; these bridges are implicated in subunit movement. Contacts the tRNAs in the A and P-sites. This chain is Small ribosomal subunit protein uS13, found in Lactobacillus delbrueckii subsp. bulgaricus (strain ATCC 11842 / DSM 20081 / BCRC 10696 / JCM 1002 / NBRC 13953 / NCIMB 11778 / NCTC 12712 / WDCM 00102 / Lb 14).